The following is a 122-amino-acid chain: Iron-sulfur cluster insertion protein ErpA (122 aa).

Positions 50, 114, and 116 each coordinate iron-sulfur cluster.

It belongs to the HesB/IscA family. Homodimer. It depends on iron-sulfur cluster as a cofactor.

In terms of biological role, required for insertion of 4Fe-4S clusters for at least IspG. The polypeptide is Iron-sulfur cluster insertion protein ErpA (Alkalilimnicola ehrlichii (strain ATCC BAA-1101 / DSM 17681 / MLHE-1)).